The following is a 420-amino-acid chain: Glutamate dehydrogenase (420 aa).

The active site involves K105. 220-226 (GYGNAGY) serves as a coordination point for NAD(+).

The protein belongs to the Glu/Leu/Phe/Val dehydrogenases family. As to quaternary structure, homohexamer.

Its subcellular location is the cytoplasm. It catalyses the reaction L-glutamate + NAD(+) + H2O = 2-oxoglutarate + NH4(+) + NADH + H(+). The catalysed reaction is L-glutamate + NADP(+) + H2O = 2-oxoglutarate + NH4(+) + NADPH + H(+). This chain is Glutamate dehydrogenase (gdhA), found in Pyrococcus horikoshii (strain ATCC 700860 / DSM 12428 / JCM 9974 / NBRC 100139 / OT-3).